Consider the following 198-residue polypeptide: MVKCKLFFWLISWFLKVKNGEKVWKFLKSCPENCYSEPQFAFIGRSNVGKSTLINALANKKIAKTSTKPGRTQLLNFYKNESEKLFVDLPGYGYAAVSKTKKHQIDRIIAGYFQKDQPISAVFLILDARVGFTNLDYIMIEYIIQQGFKLHILANKIDKTNQSTRAILLNQCKKLKLNCLLISAKNKNNLSKLQELLE.

The EngB-type G domain occupies 36–198; it reads SEPQFAFIGR…NLSKLQELLE (163 aa). Residues 44-51, 70-74, 88-91, 155-158, and 182-184 each bind GTP; these read GRSNVGKS, GRTQL, DLPG, NKID, and ISA. 2 residues coordinate Mg(2+): Ser51 and Thr72.

This sequence belongs to the TRAFAC class TrmE-Era-EngA-EngB-Septin-like GTPase superfamily. EngB GTPase family. Requires Mg(2+) as cofactor.

Its function is as follows. Necessary for normal cell division and for the maintenance of normal septation. The sequence is that of Probable GTP-binding protein EngB from Mesomycoplasma hyopneumoniae (strain 232) (Mycoplasma hyopneumoniae).